The chain runs to 221 residues: Probable endo-1,4-beta-xylanase B (221 aa).

Positions 1–19 (MVSFSSLALALSTVVGVLA) are cleaved as a signal peptide. A GH11 domain is found at 33-221 (QLTHSQTGTK…SSGSATMTVS (189 aa)). Catalysis depends on Glu-117, which acts as the Nucleophile. Residue Glu-208 is the Proton donor of the active site.

Belongs to the glycosyl hydrolase 11 (cellulase G) family.

Its subcellular location is the secreted. The enzyme catalyses Endohydrolysis of (1-&gt;4)-beta-D-xylosidic linkages in xylans.. The protein operates within glycan degradation; xylan degradation. Endo-1,4-beta-xylanase involved in the hydrolysis of xylan, a major structural heterogeneous polysaccharide found in plant biomass representing the second most abundant polysaccharide in the biosphere, after cellulose. The polypeptide is Probable endo-1,4-beta-xylanase B (xlnB) (Aspergillus clavatus (strain ATCC 1007 / CBS 513.65 / DSM 816 / NCTC 3887 / NRRL 1 / QM 1276 / 107)).